The chain runs to 321 residues: Viral T-cell receptor beta chain-like T17T-22 (321 aa).

The signal sequence occupies residues 1–28 (MISWLPSVAMGSRLLCCVALCLLGAGPA). The tract at residues 29 to 122 (DSGLTQTPRH…DSALYLCASS (94 aa)) is v segment. Residue asparagine 105 is glycosylated (N-linked (GlcNAc...) asparagine; by host). A d segment region spans residues 123–128 (PNEDSE). Positions 129-144 (YGETLYFGEGSRLTVV) are j segment. Positions 145–321 (EDLKKVSPPK…LMAKVKRKDS (177 aa)) are c region. Residues asparagine 214 and asparagine 264 are each glycosylated (N-linked (GlcNAc...) asparagine; by host).

The protein is Viral T-cell receptor beta chain-like T17T-22 (V-TCR) of Feline leukemia virus.